The sequence spans 908 residues: Flap endonuclease GEN homolog 1 (908 aa).

The tract at residues 2-96 (GVNDLWQILE…SKRTQTRYGP (95 aa)) is XPG-N domain. Residues Asp30, Glu75, Glu134, Glu136, Asp155, Asp157, and Asp208 each coordinate Mg(2+). The tract at residues 122 to 208 (ECLGMPWVQA…VGLAVLLGCD (87 aa)) is XPG-I domain. The 5'-3' exonuclease domain stretch occupies residues 208-383 (DYLPKGVPGV…LLVLLTRYDM (176 aa)). A chromodomain region spans residues 389–463 (GRKTSNQLQP…VYQKQLSETK (75 aa)). Disordered regions lie at residues 460–482 (SETK…LPEA), 629–650 (YESE…QSNP), 792–834 (RDSS…NKLR), and 853–886 (AEDE…SWEN). A compositionally biased stretch (basic residues) spans 465 to 476 (RKQKSMKNKPKG). Ser794 and Ser795 each carry phosphoserine. Residues 824–834 (HVRDSTHNKLR) show a composition bias toward basic and acidic residues.

It belongs to the XPG/RAD2 endonuclease family. GEN subfamily. In terms of assembly, largely monomeric, dimerizes on the Holliday junction and the first nick occurs upon dimerization at the junction. It depends on Mg(2+) as a cofactor. As to expression, expressed in bone marrow and testis and to a lesser extent in thymus, spleen, brain and colon.

Its subcellular location is the nucleus. Its function is as follows. Endonuclease which resolves Holliday junctions (HJs) by the introduction of symmetrically related cuts across the junction point, to produce nicked duplex products in which the nicks can be readily ligated. Four-way DNA intermediates, also known as Holliday junctions, are formed during homologous recombination and DNA repair, and their resolution is necessary for proper chromosome segregation. Cleaves HJs by a nick and counter-nick mechanism involving dual coordinated incisions that lead to the formation of ligatable nicked duplex products. Cleavage of the first strand is rate limiting, while second strand cleavage is rapid. Largely monomeric, dimerizes on the HJ and the first nick occurs upon dimerization at the junction. Efficiently cleaves both single and double HJs contained within large recombination intermediates. Exhibits a weak sequence preference for incision between two G residues that reside in a T-rich region of DNA. Also has endonuclease activity on 5'-flap and replication fork (RF) DNA substrates. In Mus musculus (Mouse), this protein is Flap endonuclease GEN homolog 1 (Gen1).